A 248-amino-acid chain; its full sequence is ATP synthase subunit a, chloroplastic (248 aa).

5 helical membrane passes run 38–58, 96–116, 135–155, 200–220, and 221–241; these read QVLITSWIVIAVLLGSATIAV, VPFIGTMFLFIFVSNWSGALL, INTTVALALLTSVAYFYAGLA, LVVAVLVSPVPLVVPIPVMFL, and GLFTSGIQALIFATLAAAYIG.

The protein belongs to the ATPase A chain family. In terms of assembly, F-type ATPases have 2 components, CF(1) - the catalytic core - and CF(0) - the membrane proton channel. CF(1) has five subunits: alpha(3), beta(3), gamma(1), delta(1), epsilon(1). CF(0) has four main subunits: a, b, b' and c.

Its subcellular location is the plastid. It is found in the chloroplast thylakoid membrane. Its function is as follows. Key component of the proton channel; it plays a direct role in the translocation of protons across the membrane. The protein is ATP synthase subunit a, chloroplastic of Pinus koraiensis (Korean pine).